A 695-amino-acid polypeptide reads, in one-letter code: Elongation factor G 2 (695 aa).

The tr-type G domain occupies 5-280 (SKYRNIGIFA…AVVDYLPSPT (276 aa)). Residues 14 to 21 (AHVDAGKT), 78 to 82 (DTPGH), and 132 to 135 (NKLD) each bind GTP.

The protein belongs to the TRAFAC class translation factor GTPase superfamily. Classic translation factor GTPase family. EF-G/EF-2 subfamily.

It localises to the cytoplasm. Its function is as follows. Catalyzes the GTP-dependent ribosomal translocation step during translation elongation. During this step, the ribosome changes from the pre-translocational (PRE) to the post-translocational (POST) state as the newly formed A-site-bound peptidyl-tRNA and P-site-bound deacylated tRNA move to the P and E sites, respectively. Catalyzes the coordinated movement of the two tRNA molecules, the mRNA and conformational changes in the ribosome. In Photobacterium profundum (strain SS9), this protein is Elongation factor G 2.